We begin with the raw amino-acid sequence, 80 residues long: RNA-binding protein KhpA (80 aa).

A KH domain is found at Gly-33–Gln-80.

Belongs to the KhpA RNA-binding protein family.

The protein localises to the cytoplasm. A probable RNA-binding protein. The sequence is that of RNA-binding protein KhpA from Mycobacterium leprae (strain TN).